The sequence spans 306 residues: Diacylglycerol kinase (306 aa).

In terms of domain architecture, DAGKc spans 1-132 (MRKRARIIYN…VDIGKMNSRY (132 aa)). ATP contacts are provided by residues 10-14 (NPTSG), threonine 41, 67-73 (GDGTLNE), and threonine 94. Arginine 213, aspartate 216, and tyrosine 218 together coordinate Mg(2+). Catalysis depends on glutamate 273, which acts as the Proton acceptor.

It belongs to the diacylglycerol/lipid kinase family. Homodimer. Mg(2+) serves as cofactor.

The catalysed reaction is a 1,2-diacyl-sn-glycerol + ATP = a 1,2-diacyl-sn-glycero-3-phosphate + ADP + H(+). Catalyzes the phosphorylation of diacylglycerol (DAG) into phosphatidic acid. Is a key enzyme involved in the production of lipoteichoic acid by reintroducing DAG formed from the breakdown of membrane phospholipids into the phosphatidylglycerol biosynthetic pathway. The protein is Diacylglycerol kinase (dagK) of Staphylococcus carnosus (strain TM300).